The chain runs to 298 residues: Nucleotide-binding protein MLBr00563 (298 aa).

Residue 21–28 (GLSGAGRG) participates in ATP binding. 72-75 (DVRS) contacts GTP.

Belongs to the RapZ-like family.

In terms of biological role, displays ATPase and GTPase activities. The polypeptide is Nucleotide-binding protein MLBr00563 (Mycobacterium leprae (strain Br4923)).